Consider the following 175-residue polypeptide: Ribosome maturation factor RimM (175 aa).

In terms of domain architecture, PRC barrel spans 103 to 175 (EGEYYWSDLI…LLTVDWDPDF (73 aa)).

The protein belongs to the RimM family. Binds ribosomal protein uS19.

Its subcellular location is the cytoplasm. Its function is as follows. An accessory protein needed during the final step in the assembly of 30S ribosomal subunit, possibly for assembly of the head region. Essential for efficient processing of 16S rRNA. May be needed both before and after RbfA during the maturation of 16S rRNA. It has affinity for free ribosomal 30S subunits but not for 70S ribosomes. This is Ribosome maturation factor RimM from Nitrosococcus oceani (strain ATCC 19707 / BCRC 17464 / JCM 30415 / NCIMB 11848 / C-107).